Consider the following 182-residue polypeptide: Constitutive photomorphogenesis protein 10 (182 aa).

Residues Ala-36–Lys-182 enclose the UBC core domain.

Belongs to the ubiquitin-conjugating enzyme family. Component of the CDD complex, at least composed of COP10, DET1 and DDB1A. Interacts with E3 ubiquitin ligase COP1. Interacts with E2 ubiquitin conjugating UBC5. Interacts with CSN3, CSN4 and CSN8 subunits of the COP9 complex. As to expression, expressed in flower, leaf, stem and seedling. Expressed at lower level in root.

It localises to the nucleus. Its function is as follows. Component of light signal transduction machinery. Involved in repression of photomorphogenesis in darkness by participating in the CDD complex, a complex probably required to regulate the activity of ubiquitin conjugating enzymes (E2s). Repression of photomorphogenesis is probably mediated by ubiquitination and subsequent degradation of photomorphogenesis-promoting factors such as HY5, HYH and LAF1. Although strongly related to ubiquitin-conjugating enzyme, it has no catalytic activity by itself due to the absence of the conserved Cys active site at position 120. It can however enhance the activity of E2 conjugating enzymes. The sequence is that of Constitutive photomorphogenesis protein 10 (COP10) from Arabidopsis thaliana (Mouse-ear cress).